A 366-amino-acid polypeptide reads, in one-letter code: Chorismate synthase (366 aa).

The NADP(+) site is built by Arg-48 and Arg-54. FMN-binding positions include 125–127 (RSS), 242–243 (NA), Gly-287, 302–306 (KPTSS), and Arg-328.

Belongs to the chorismate synthase family. In terms of assembly, homotetramer. Requires FMNH2 as cofactor.

It catalyses the reaction 5-O-(1-carboxyvinyl)-3-phosphoshikimate = chorismate + phosphate. The protein operates within metabolic intermediate biosynthesis; chorismate biosynthesis; chorismate from D-erythrose 4-phosphate and phosphoenolpyruvate: step 7/7. Catalyzes the anti-1,4-elimination of the C-3 phosphate and the C-6 proR hydrogen from 5-enolpyruvylshikimate-3-phosphate (EPSP) to yield chorismate, which is the branch point compound that serves as the starting substrate for the three terminal pathways of aromatic amino acid biosynthesis. This reaction introduces a second double bond into the aromatic ring system. The protein is Chorismate synthase of Rhodospirillum rubrum (strain ATCC 11170 / ATH 1.1.1 / DSM 467 / LMG 4362 / NCIMB 8255 / S1).